A 261-amino-acid chain; its full sequence is Succinate dehydrogenase iron-sulfur subunit (261 aa).

Positions M1–E23 are disordered. Residues R28–M119 enclose the 2Fe-2S ferredoxin-type domain. Residues C80, C85, and C100 each contribute to the [2Fe-2S] cluster site. Positions G161 to Y191 constitute a 4Fe-4S ferredoxin-type domain. Positions 171, 174, and 177 each coordinate [4Fe-4S] cluster. C181 contacts [3Fe-4S] cluster. An a ubiquinone-binding site is contributed by W186. Residues C228 and C234 each contribute to the [3Fe-4S] cluster site. Residue C238 coordinates [4Fe-4S] cluster.

The protein belongs to the succinate dehydrogenase/fumarate reductase iron-sulfur protein family. As to quaternary structure, part of an enzyme complex containing four subunits: a flavoprotein, an iron-sulfur, cytochrome b-556, and a hydrophobic anchor protein. It depends on [2Fe-2S] cluster as a cofactor. Requires [3Fe-4S] cluster as cofactor. [4Fe-4S] cluster serves as cofactor.

The catalysed reaction is a quinone + succinate = fumarate + a quinol. The protein operates within carbohydrate metabolism; tricarboxylic acid cycle; fumarate from succinate (bacterial route): step 1/1. The polypeptide is Succinate dehydrogenase iron-sulfur subunit (sdhB) (Rickettsia felis (strain ATCC VR-1525 / URRWXCal2) (Rickettsia azadi)).